The sequence spans 111 residues: MRDIGIDVKPPERECEDENCPFHGTLSVRGQLLRGKVVKVYGKTAVIERELIRYVPKFERYMKKRSKLHAHNPRCIRARPGDIVTIGECRPISKTKSFVILEVVGNEGNKS.

Belongs to the universal ribosomal protein uS17 family. Part of the 30S ribosomal subunit.

Functionally, one of the primary rRNA binding proteins, it binds specifically to the 5'-end of 16S ribosomal RNA. The polypeptide is Small ribosomal subunit protein uS17 (Archaeoglobus fulgidus (strain ATCC 49558 / DSM 4304 / JCM 9628 / NBRC 100126 / VC-16)).